Consider the following 415-residue polypeptide: Probable cytosolic iron-sulfur protein assembly protein 1 (415 aa).

The WD 1 repeat unit spans residues 9–48 (AHDDKVWSLSSHPTLPLLATASTDKCSNIYRLSCSNASSS). The interval 45–70 (ASSSSSSSSPPSPPSPPSSSSPRRNF) is disordered. The segment covering 54-63 (PPSPPSPPSS) has biased composition (pro residues). WD repeat units follow at residues 79–131 (THRR…DDNT), 160–200 (GHEN…EEFE), 207–246 (DHTQ…DEWS), 253–300 (GHEG…GFNG), 335–374 (IHTH…WEVE), and 380–415 (AHGV…IWEV).

The protein belongs to the WD repeat CIA1 family. In terms of assembly, interacts with NAR1.

It localises to the cytoplasm. The protein resides in the nucleus. In terms of biological role, essential component of the cytosolic iron-sulfur (Fe/S) protein assembly machinery. Required for the maturation of extramitochondrial Fe/S proteins. In Lodderomyces elongisporus (strain ATCC 11503 / CBS 2605 / JCM 1781 / NBRC 1676 / NRRL YB-4239) (Yeast), this protein is Probable cytosolic iron-sulfur protein assembly protein 1.